A 465-amino-acid chain; its full sequence is Ribulose bisphosphate carboxylase large chain (465 aa).

Lys4 carries the N6,N6,N6-trimethyllysine modification. 2 residues coordinate substrate: Asn113 and Thr163. Lys165 serves as the catalytic Proton acceptor. Lys167 is a binding site for substrate. Positions 191, 193, and 194 each coordinate Mg(2+). Lys191 carries the N6-carboxylysine modification. Residue His284 is the Proton acceptor of the active site. Substrate is bound by residues Arg285, His317, and Ser369.

The protein belongs to the RuBisCO large chain family. Type I subfamily. Heterohexadecamer of 8 large chains and 8 small chains; disulfide-linked. The disulfide link is formed within the large subunit homodimers. Mg(2+) is required as a cofactor. The disulfide bond which can form in the large chain dimeric partners within the hexadecamer appears to be associated with oxidative stress and protein turnover.

It localises to the plastid. The protein localises to the chloroplast. The enzyme catalyses 2 (2R)-3-phosphoglycerate + 2 H(+) = D-ribulose 1,5-bisphosphate + CO2 + H2O. The catalysed reaction is D-ribulose 1,5-bisphosphate + O2 = 2-phosphoglycolate + (2R)-3-phosphoglycerate + 2 H(+). RuBisCO catalyzes two reactions: the carboxylation of D-ribulose 1,5-bisphosphate, the primary event in carbon dioxide fixation, as well as the oxidative fragmentation of the pentose substrate in the photorespiration process. Both reactions occur simultaneously and in competition at the same active site. The sequence is that of Ribulose bisphosphate carboxylase large chain from Morus rubra (Red mulberry).